Reading from the N-terminus, the 306-residue chain is Phosphatidylserine decarboxylase proenzyme (306 aa).

Catalysis depends on charge relay system; for autoendoproteolytic cleavage activity residues D98, H155, and S259. Catalysis depends on S259, which acts as the Schiff-base intermediate with substrate; via pyruvic acid; for decarboxylase activity. S259 is modified (pyruvic acid (Ser); by autocatalysis).

It belongs to the phosphatidylserine decarboxylase family. PSD-B subfamily. Prokaryotic type I sub-subfamily. Heterodimer of a large membrane-associated beta subunit and a small pyruvoyl-containing alpha subunit. Requires pyruvate as cofactor. Is synthesized initially as an inactive proenzyme. Formation of the active enzyme involves a self-maturation process in which the active site pyruvoyl group is generated from an internal serine residue via an autocatalytic post-translational modification. Two non-identical subunits are generated from the proenzyme in this reaction, and the pyruvate is formed at the N-terminus of the alpha chain, which is derived from the carboxyl end of the proenzyme. The autoendoproteolytic cleavage occurs by a canonical serine protease mechanism, in which the side chain hydroxyl group of the serine supplies its oxygen atom to form the C-terminus of the beta chain, while the remainder of the serine residue undergoes an oxidative deamination to produce ammonia and the pyruvoyl prosthetic group on the alpha chain. During this reaction, the Ser that is part of the protease active site of the proenzyme becomes the pyruvoyl prosthetic group, which constitutes an essential element of the active site of the mature decarboxylase.

It is found in the cell membrane. The enzyme catalyses a 1,2-diacyl-sn-glycero-3-phospho-L-serine + H(+) = a 1,2-diacyl-sn-glycero-3-phosphoethanolamine + CO2. It functions in the pathway phospholipid metabolism; phosphatidylethanolamine biosynthesis; phosphatidylethanolamine from CDP-diacylglycerol: step 2/2. Catalyzes the formation of phosphatidylethanolamine (PtdEtn) from phosphatidylserine (PtdSer). The protein is Phosphatidylserine decarboxylase proenzyme of Nitrosococcus oceani (strain ATCC 19707 / BCRC 17464 / JCM 30415 / NCIMB 11848 / C-107).